Here is a 266-residue protein sequence, read N- to C-terminus: Eukaryotic translation initiation factor 3 subunit J (266 aa).

Disordered stretches follow at residues 1 to 142 and 215 to 243; these read MAPS…VSDS and MSNEKMREERAADKGNKKSKAAKTKVSLV. Positions 26-44 are enriched in acidic residues; sequence DEEEEDVLDSWDAAEDSEV. Residues 40–99 adopt a coiled-coil conformation; it reads EDSEVEREKAAKAAEAKAKAEAEAAAKKKSKAQRIQEHKEERKKREEEDSSSESEEDEAE. Basic and acidic residues-rich tracts occupy residues 45–65 and 73–86; these read EREKAAKAAEAKAKAEAEAAA and RIQEHKEERKKREE. The span at 87 to 97 shows a compositional bias: acidic residues; the sequence is EDSSSESEEDE. Basic and acidic residues-rich tracts occupy residues 98 to 118 and 218 to 230; these read AERRARLRRTEKDSDLKHAED and EKMREERAADKGN.

This sequence belongs to the eIF-3 subunit J family. In terms of assembly, component of the eukaryotic translation initiation factor 3 (eIF-3) complex.

The protein resides in the cytoplasm. Its function is as follows. Component of the eukaryotic translation initiation factor 3 (eIF-3) complex, which is involved in protein synthesis of a specialized repertoire of mRNAs and, together with other initiation factors, stimulates binding of mRNA and methionyl-tRNAi to the 40S ribosome. The eIF-3 complex specifically targets and initiates translation of a subset of mRNAs involved in cell proliferation. This Aspergillus terreus (strain NIH 2624 / FGSC A1156) protein is Eukaryotic translation initiation factor 3 subunit J (hcr1).